A 300-amino-acid chain; its full sequence is tRNA dimethylallyltransferase (300 aa).

8–15 contacts ATP; the sequence is GASASGKS. 10–15 lines the substrate pocket; it reads SASGKS. Residues 33-36 form an interaction with substrate tRNA region; sequence DSLS.

Belongs to the IPP transferase family. In terms of assembly, monomer. It depends on Mg(2+) as a cofactor.

The catalysed reaction is adenosine(37) in tRNA + dimethylallyl diphosphate = N(6)-dimethylallyladenosine(37) in tRNA + diphosphate. Functionally, catalyzes the transfer of a dimethylallyl group onto the adenine at position 37 in tRNAs that read codons beginning with uridine, leading to the formation of N6-(dimethylallyl)adenosine (i(6)A). This is tRNA dimethylallyltransferase from Wolinella succinogenes (strain ATCC 29543 / DSM 1740 / CCUG 13145 / JCM 31913 / LMG 7466 / NCTC 11488 / FDC 602W) (Vibrio succinogenes).